The following is a 444-amino-acid chain: Type II NADH:quinone oxidoreductase (444 aa).

FAD is bound by residues 8–12, N38, and S120; that span reads GGGAG. NAD(+) is bound by residues 186–191 and G285; that span reads VGGGAT. The FAD site is built by D325 and A341.

This sequence belongs to the NADH dehydrogenase family. It depends on FAD as a cofactor.

It is found in the cell inner membrane. The catalysed reaction is a quinone + NADH + H(+) = a quinol + NAD(+). It catalyses the reaction a ubiquinone + NADH + H(+) = a ubiquinol + NAD(+). Its function is as follows. Alternative, nonproton pumping NADH:quinone oxidoreductase that delivers electrons to the respiratory chain by oxidation of NADH and reduction of quinones. Utilizes NADH exclusively, and electron flow from NADH to ubiquinone does not generate an electrochemical gradient. This is Type II NADH:quinone oxidoreductase (ndh) from Haemophilus influenzae (strain ATCC 51907 / DSM 11121 / KW20 / Rd).